The chain runs to 426 residues: Putative glutamate--cysteine ligase 2 (426 aa).

It belongs to the glutamate--cysteine ligase type 2 family. YbdK subfamily.

It catalyses the reaction L-cysteine + L-glutamate + ATP = gamma-L-glutamyl-L-cysteine + ADP + phosphate + H(+). Functionally, ATP-dependent carboxylate-amine ligase which exhibits weak glutamate--cysteine ligase activity. This is Putative glutamate--cysteine ligase 2 from Bradyrhizobium diazoefficiens (strain JCM 10833 / BCRC 13528 / IAM 13628 / NBRC 14792 / USDA 110).